The chain runs to 504 residues: ATP synthase subunit alpha, chloroplastic (504 aa).

170–177 lines the ATP pocket; sequence GDRQTGKT.

This sequence belongs to the ATPase alpha/beta chains family. In terms of assembly, F-type ATPases have 2 components, CF(1) - the catalytic core - and CF(0) - the membrane proton channel. CF(1) has five subunits: alpha(3), beta(3), gamma(1), delta(1), epsilon(1). CF(0) has four main subunits: a, b, b' and c.

It localises to the plastid. Its subcellular location is the chloroplast thylakoid membrane. It carries out the reaction ATP + H2O + 4 H(+)(in) = ADP + phosphate + 5 H(+)(out). Functionally, produces ATP from ADP in the presence of a proton gradient across the membrane. The alpha chain is a regulatory subunit. The chain is ATP synthase subunit alpha, chloroplastic from Porphyra purpurea (Red seaweed).